We begin with the raw amino-acid sequence, 196 residues long: Probable DNA-directed RNA polymerase subunit delta (196 aa).

The HTH HARE-type domain occupies 14 to 81; the sequence is LSMIEVAHEI…GDNVWGLRSW (68 aa). Acidic residues predominate over residues 119 to 150; sequence DDDDVIDYDDDDPEDEDLDNDYDDEDDDDDEG. Residues 119 to 196 are disordered; the sequence is DDDDVIDYDD…DADLDEENQD (78 aa). Residues 151-161 are compositionally biased toward basic and acidic residues; it reads SHELKQYTKDL. 2 stretches are compositionally biased toward acidic residues: residues 162-176 and 186-196; these read DDID…ELAD and SDADLDEENQD.

It belongs to the RpoE family. RNAP is composed of a core of 2 alpha, a beta and a beta' subunits. The core is associated with a delta subunit and one of several sigma factors.

Its function is as follows. Participates in both the initiation and recycling phases of transcription. In the presence of the delta subunit, RNAP displays an increased specificity of transcription, a decreased affinity for nucleic acids, and an increased efficiency of RNA synthesis because of enhanced recycling. This chain is Probable DNA-directed RNA polymerase subunit delta, found in Ligilactobacillus salivarius (strain UCC118) (Lactobacillus salivarius).